We begin with the raw amino-acid sequence, 372 residues long: Flagellar P-ring protein (372 aa).

A signal peptide spans 1-29 (MPARPIPVPAFALALALAAALAVPAPAAA).

The protein belongs to the FlgI family. The basal body constitutes a major portion of the flagellar organelle and consists of four rings (L,P,S, and M) mounted on a central rod.

It localises to the periplasm. It is found in the bacterial flagellum basal body. Assembles around the rod to form the L-ring and probably protects the motor/basal body from shearing forces during rotation. This is Flagellar P-ring protein from Anaeromyxobacter dehalogenans (strain 2CP-1 / ATCC BAA-258).